The primary structure comprises 70 residues: DNA-directed RNA polymerase subunit epsilon (70 aa).

It belongs to the RNA polymerase subunit epsilon family. RNAP is composed of a core of 2 alpha, a beta and a beta' subunit. The core is associated with a delta subunit, and at least one of epsilon or omega. When a sigma factor is associated with the core the holoenzyme is formed, which can initiate transcription.

It carries out the reaction RNA(n) + a ribonucleoside 5'-triphosphate = RNA(n+1) + diphosphate. A non-essential component of RNA polymerase (RNAP). The protein is DNA-directed RNA polymerase subunit epsilon of Bacillus cytotoxicus (strain DSM 22905 / CIP 110041 / 391-98 / NVH 391-98).